The chain runs to 272 residues: Shikimate dehydrogenase (NADP(+)) (272 aa).

Residues 14–16 (SKS) and Thr61 each bind shikimate. Lys65 (proton acceptor) is an active-site residue. NADP(+) is bound at residue Glu77. Positions 86 and 102 each coordinate shikimate. Residues 126–130 (GAGGA), 149–154 (NRTVSR), and Met213 contribute to the NADP(+) site. Residue Tyr215 participates in shikimate binding. Gly237 is a binding site for NADP(+).

This sequence belongs to the shikimate dehydrogenase family. As to quaternary structure, homodimer.

The catalysed reaction is shikimate + NADP(+) = 3-dehydroshikimate + NADPH + H(+). It participates in metabolic intermediate biosynthesis; chorismate biosynthesis; chorismate from D-erythrose 4-phosphate and phosphoenolpyruvate: step 4/7. Its function is as follows. Involved in the biosynthesis of the chorismate, which leads to the biosynthesis of aromatic amino acids. Catalyzes the reversible NADPH linked reduction of 3-dehydroshikimate (DHSA) to yield shikimate (SA). The chain is Shikimate dehydrogenase (NADP(+)) from Escherichia coli O45:K1 (strain S88 / ExPEC).